The sequence spans 320 residues: Acetyl-coenzyme A carboxylase carboxyl transferase subunit alpha (320 aa).

Residues 41 to 295 (SIEEKAAQAL…GDAIAGALND (255 aa)) form the CoA carboxyltransferase C-terminal domain.

It belongs to the AccA family. Acetyl-CoA carboxylase is a heterohexamer composed of biotin carboxyl carrier protein (AccB), biotin carboxylase (AccC) and two subunits each of ACCase subunit alpha (AccA) and ACCase subunit beta (AccD).

It localises to the cytoplasm. It catalyses the reaction N(6)-carboxybiotinyl-L-lysyl-[protein] + acetyl-CoA = N(6)-biotinyl-L-lysyl-[protein] + malonyl-CoA. The protein operates within lipid metabolism; malonyl-CoA biosynthesis; malonyl-CoA from acetyl-CoA: step 1/1. In terms of biological role, component of the acetyl coenzyme A carboxylase (ACC) complex. First, biotin carboxylase catalyzes the carboxylation of biotin on its carrier protein (BCCP) and then the CO(2) group is transferred by the carboxyltransferase to acetyl-CoA to form malonyl-CoA. This chain is Acetyl-coenzyme A carboxylase carboxyl transferase subunit alpha, found in Nitrobacter winogradskyi (strain ATCC 25391 / DSM 10237 / CIP 104748 / NCIMB 11846 / Nb-255).